Reading from the N-terminus, the 1166-residue chain is Poly [ADP-ribose] polymerase tankyrase-2 (1166 aa).

3 ANK repeats span residues Arg-57–Asp-89, Gly-90–Asn-122, and Trp-123–Thr-155. Asn-203 is modified ((3S)-3-hydroxyasparagine; by HIF1AN; partial). 6 ANK repeats span residues Arg-210–Lys-242, Gly-243–Leu-275, Trp-276–Cys-308, Thr-363–Lys-398, Glu-399–Asn-431, and Leu-432–Leu-464. His-238 carries the (3S)-3-hydroxyhistidine; by HIF1AN; partial modification. A (3S)-3-hydroxyasparagine; by HIF1AN; partial modification is found at Asn-271. Asn-427 is subject to (3S)-3-hydroxyasparagine; by HIF1AN; partial. Residue Asn-518 is modified to (3S)-3-hydroxyasparagine; by HIF1AN; partial. ANK repeat units follow at residues Arg-525–Lys-557, Gly-558–Leu-590, and Trp-591–Arg-623. Residues Leu-545–His-553 form an HIF1AN-binding region. His-553 carries the (3S)-3-hydroxyhistidine; by HIF1AN; partial modification. Asn-586 carries the post-translational modification (3S)-3-hydroxyasparagine; by HIF1AN; partial. (3S)-3-hydroxyasparagine; by HIF1AN; partial is present on residues Asn-671, Asn-706, and Asn-739. ANK repeat units follow at residues Arg-678–Lys-710, Gly-711–Lys-743, and Trp-744–Gln-776. Residues Gly-819 to Ser-839 form a disordered region. A compositionally biased stretch (low complexity) spans Ala-822–Ser-839. Residues Gly-873–Gly-936 enclose the SAM domain. A PARP catalytic domain is found at Ser-959–Val-1164. Zn(2+)-binding residues include Cys-1081, His-1084, Cys-1089, and Cys-1092.

It belongs to the ARTD/PARP family. As to quaternary structure, oligomerizes and associates with TNKS. Interacts with the cytoplasmic domain of LNPEP/Otase in SLC2A4/GLUT4-vesicles. Binds to the N-terminus of Grb14 and TRF1 with its ankyrin repeat region. Interacts with HIF1AN. Interacts with RNF146; this interaction leads to ubiquitination and proteasomal degradation. Interacts with NUMA1. Post-translationally, ubiquitinated at 'Lys-48' and 'Lys-63' by RNF146 when auto-poly-ADP-ribosylated; this leads to degradation. Deubiquitinated by USP25; leading to stabilization. In terms of processing, ADP-ribosylated (-auto). Poly-ADP-ribosylated protein is recognized by RNF146, followed by ubiquitination. The crystallographic evidence suggests that the 3-hydroxyhistidine may be the (3S) stereoisomer. As to expression, highly expressed in placenta, skeletal muscle, liver, brain, kidney, heart, thymus, spinal cord, lung, peripheral blood leukocytes, pancreas, lymph nodes, spleen, prostate, testis, ovary, small intestine, colon, mammary gland, breast and breast carcinoma, and in common-type meningioma. Highly expressed in fetal liver, heart and brain.

The protein resides in the cytoplasm. Its subcellular location is the golgi apparatus membrane. The protein localises to the nucleus. It is found in the chromosome. It localises to the telomere. The enzyme catalyses NAD(+) + (ADP-D-ribosyl)n-acceptor = nicotinamide + (ADP-D-ribosyl)n+1-acceptor + H(+).. The catalysed reaction is L-aspartyl-[protein] + NAD(+) = 4-O-(ADP-D-ribosyl)-L-aspartyl-[protein] + nicotinamide. It carries out the reaction L-glutamyl-[protein] + NAD(+) = 5-O-(ADP-D-ribosyl)-L-glutamyl-[protein] + nicotinamide. Its activity is regulated as follows. Specifically inhibited by XAV939, a small molecule, leading to inhibit the Wnt signaling pathway by stabilizing AXIN1 and AXIN2. Inhibited by talazoparib. Functionally, poly-ADP-ribosyltransferase involved in various processes such as Wnt signaling pathway, telomere length and vesicle trafficking. Acts as an activator of the Wnt signaling pathway by mediating poly-ADP-ribosylation of AXIN1 and AXIN2, 2 key components of the beta-catenin destruction complex: poly-ADP-ribosylated target proteins are recognized by RNF146, which mediates their ubiquitination and subsequent degradation. Also mediates poly-ADP-ribosylation of BLZF1 and CASC3, followed by recruitment of RNF146 and subsequent ubiquitination. Mediates poly-ADP-ribosylation of TERF1, thereby contributing to the regulation of telomere length. Stimulates 26S proteasome activity. The chain is Poly [ADP-ribose] polymerase tankyrase-2 from Homo sapiens (Human).